Here is a 178-residue protein sequence, read N- to C-terminus: uncharacterized protein (178 aa).

This is an uncharacterized protein from Rhizobium fredii (Sinorhizobium fredii).